Here is a 732-residue protein sequence, read N- to C-terminus: Calcineurin-interacting protein 2 (732 aa).

6 disordered regions span residues 1–24 (MNRG…REPY), 115–169 (DYEP…ALPK), 181–232 (QKKD…LDDR), 310–351 (ILSR…TSRR), 372–397 (RSQS…STVS), and 426–708 (QTVT…PLEE). The segment covering 8–17 (YNRSRSTSSR) has biased composition (polar residues). Positions 117 to 129 (EPLRKEPELKEQK) are enriched in basic and acidic residues. 2 stretches are compositionally biased toward polar residues: residues 151–163 (SGIT…SSRT) and 189–208 (IPRQ…NNEL). The span at 312 to 323 (SRSVSTSPSSVT) shows a compositional bias: low complexity. Residues 324–351 (DNIPKTSTSRIPSSENPKTMEHTTTSRR) are compositionally biased toward polar residues. Positions 426 to 439 (QTVTNVRVPSSRGS) are enriched in polar residues. 2 stretches are compositionally biased toward basic and acidic residues: residues 526–538 (QSPE…RFAD) and 546–557 (PGDHQAREEDLP). Over residues 607-619 (SVTPSEKSLPRNS) the composition is skewed to polar residues. Residues 688 to 705 (NSPNKSSSSSKARPSAAP) are compositionally biased toward low complexity.

As to quaternary structure, interacts with tax-6. Expressed in intestine.

The protein is Calcineurin-interacting protein 2 of Caenorhabditis elegans.